Consider the following 198-residue polypeptide: Ribonuclease HII (198 aa).

The 189-residue stretch at 10 to 198 (QLVAGVDEVG…PVKRALGLAS (189 aa)) folds into the RNase H type-2 domain. A divalent metal cation contacts are provided by Asp16, Glu17, and Asp108.

This sequence belongs to the RNase HII family. It depends on Mn(2+) as a cofactor. Requires Mg(2+) as cofactor.

It is found in the cytoplasm. It catalyses the reaction Endonucleolytic cleavage to 5'-phosphomonoester.. Endonuclease that specifically degrades the RNA of RNA-DNA hybrids. The chain is Ribonuclease HII from Escherichia coli O6:H1 (strain CFT073 / ATCC 700928 / UPEC).